The sequence spans 435 residues: Methylenetetrahydrofolate--tRNA-(uracil-5-)-methyltransferase TrmFO (435 aa).

7-12 (GAGLAG) serves as a coordination point for FAD.

Belongs to the MnmG family. TrmFO subfamily. Requires FAD as cofactor.

It is found in the cytoplasm. It carries out the reaction uridine(54) in tRNA + (6R)-5,10-methylene-5,6,7,8-tetrahydrofolate + NADH + H(+) = 5-methyluridine(54) in tRNA + (6S)-5,6,7,8-tetrahydrofolate + NAD(+). The catalysed reaction is uridine(54) in tRNA + (6R)-5,10-methylene-5,6,7,8-tetrahydrofolate + NADPH + H(+) = 5-methyluridine(54) in tRNA + (6S)-5,6,7,8-tetrahydrofolate + NADP(+). Functionally, catalyzes the folate-dependent formation of 5-methyl-uridine at position 54 (M-5-U54) in all tRNAs. The polypeptide is Methylenetetrahydrofolate--tRNA-(uracil-5-)-methyltransferase TrmFO (Thermotoga maritima (strain ATCC 43589 / DSM 3109 / JCM 10099 / NBRC 100826 / MSB8)).